The sequence spans 497 residues: Cytochrome P450 71A20 (497 aa).

The chain crosses the membrane as a helical span at residues 3–23; the sequence is MILITLCLTTLLALLLKSILK. Residue Cys-440 coordinates heme.

The protein belongs to the cytochrome P450 family. It depends on heme as a cofactor.

It localises to the membrane. This chain is Cytochrome P450 71A20 (CYP71A20), found in Arabidopsis thaliana (Mouse-ear cress).